A 671-amino-acid polypeptide reads, in one-letter code: Major S-layer protein (671 aa).

Residues 1–24 form the signal peptide; the sequence is MKRFAALSLAALMLLTVFASAASA. N-linked (GlcNAc...) asparagine glycans are attached at residues Asn-36, Asn-70, Asn-116, and Asn-350. The segment at 594–650 is disordered; the sequence is GEEVSGEEETPEETPTGEVTETEGEEETPTEVTETPTEGEPAPEETETTESEGTTPG. Acidic residues predominate over residues 613-622; the sequence is TETEGEEETP. Residues 623 to 633 are compositionally biased toward low complexity; sequence TEVTETPTEGE. The segment covering 634–643 has biased composition (acidic residues); sequence PAPEETETTE. A helical transmembrane segment spans residues 647 to 667; it reads TTPGFGFMFGLVGLLAVVYLV.

It belongs to the Methanosarcinales S-layer protein family. In terms of processing, glycosylated.

It is found in the secreted. The protein localises to the cell wall. Its subcellular location is the S-layer. It localises to the cell membrane. In terms of biological role, S-layer protein. The S-layer is a paracrystalline mono-layered assembly of proteins which coat the surface of the cell. This is Major S-layer protein from Methanosarcina acetivorans (strain ATCC 35395 / DSM 2834 / JCM 12185 / C2A).